Consider the following 238-residue polypeptide: Sugar fermentation stimulation protein homolog (238 aa).

It belongs to the SfsA family.

The sequence is that of Sugar fermentation stimulation protein homolog from Histophilus somni (strain 129Pt) (Haemophilus somnus).